The following is a 2090-amino-acid chain: MGDEMDAMIPEREMKDFQFRALKKVRIFDSPEELPKERSSLLAVSNKYGLVFAGGASGLQIFPTKNLLIQNKPGDDPNKIVDKVQGLLVPMKFPIHHLALSCDNLTLSACMMSSEYGSIIAFFDVRTFSNEAKQQKRPFAYHKLLKDAGGMVIDMKWNPTVPSMVAVCLADGSIAVLQVTETVKVCATLPSTVAVTSVCWSPKGKQLAVGKQNGTVVQYLPTLQEKKVIPCPPFYESDHPVRVLDVLWIGTYVFAIVYAAADGTLETSPDVVMALLPKKEEKHPEIFVNFMEPCYGSCTERQHHYYLSYIEEWDLVLAASAASTEVSILARQSDQINWESWLLEDSSRAELPVTDKSDDSLPMGVVVDYTNQVEITISDEKTLPPAPVLMLLSTDGVLCPFYMINQNPGVKSLIKTPERLSLEGERQPKSPGSTPTTPTSSQAPQKLDASAAAAPASLPPSSPAAPIATFSLLPAGGAPTVFSFGSSSLKSSATVTGEPPSYSSGSDSSKAAPGPGPSTFSFVPPSKASLAPTPAASPVAPSAASFSFGSSGFKPTLESTPVPSVSAPNIAMKPSFPPSTSAVKVNLSEKFTAAATSTPVSSSQSAPPMSPFSSASKPAASGPLSHPTPLSAPPSSVPLKSSVLPSPSGRSAQGSSSPVPSMVQKSPRITPPAAKPGSPQAKSLQPAVAEKQGHQWKDSDPVMAGIGEEIAHFQKELEELKARTSKACFQVGTSEEMKMLRTESDDLHTFLLEIKETTESLHGDISSLKTTLLEGFAGVEEAREQNERNRDSGYLHLLYKRPLDPKSEAQLQEIRRLHQYVKFAVQDVNDVLDLEWDQHLEQKKKQRHLLVPERETLFNTLANNREIINQQRKRLNHLVDSLQQLRLYKQTSLWSLSSAVPSQSSIHSFDSDLESLCNALLKTTIESHTKSLPKVPAKLSPMKQAQLRNFLAKRKTPPVRSTAPASLSRSAFLSQRYYEDLDEVSSTSSVSQSLESEDARTSCKDDEAVVQAPRHAPVVRTPSIQPSLLPHAAPFAKSHLVHGSSPGVMGTSVATSASKIIPQGADSTMLATKTVKHGAPSPSHPISAPQAAAAAALRRQMASQAPAVNTLTESTLKNVPQVVNVQELKNNPATPSTAMGSSVPYSTAKTPHPVLTPVAANQAKQGSLINSLKPSGPTPASGQLSSGDKASGTAKIETAVTSTPSASGQFSKPFSFSPSGTGFNFGIITPTPSSNFTAAQGATPSTKESSQPDAFSSGGGSKPSYEAIPESSPPSGITSASNTTPGEPAASSSRPVAPSGTALSTTSSKLETPPSKLGELLFPSSLAGETLGSFSGLRVGQADDSTKPTNKASSTSLTSTQPTKTSGVPSGFNFTAPPVLGKHTEPPVTSSATTTSVAPPAATSTSSTAVFGSLPVTSAGSSGVISFGGTSLSAGKTSFSFGSQQTNSTVPPSAPPPTTAATPLPTSFPTLSFGSLLSSATTPSLPMSAGRSTEEATSSALPEKPGDSEVSASAASLLEEQQSAQLPQAPPQTSDSVKKEPVLAQPAVSNSGTAASSTSLVALSAEATPATTGVPDARTEAVPPASSFSVPGQTAVTAAAISSAGPVAVETSSTPIASSTTSIVAPGPSAEAAAFGTVTSGSSVFAQPPAASSSSAFNQLTNNTATAPSATPVFGQVAASTAPSLFGQQTGSTASTAAATPQVSSSGFSSPAFGTTAPGVFGQTTFGQASVFGQSASSAASVFSFSQPGFSSVPAFGQPASSTPTSTSGSVFGAASSTSSSSSFSFGQSSPNTGGGLFGQSNAPAFGQSPGFGQGGSVFGGTSAATTTAATSGFSFCQASGFGSSNTGSVFGQAASTGGIVFGQQSSSSSGSVFGSGNTGRGGGFFSGLGGKPSQDAANKNPFSSASGGFGSTATSNTSNLFGNSGAKTFGGFASSSFGEQKPTGTFSSGGGSVASQGFGFSSPNKTGGFGAAPVFGSPPTFGGSPGFGGVPAFGSAPAFTSPLGSTGGKVFGEGTAAASAGGFGFGSSSNTTSFGTLASQNAPTFGSLSQQTSGFGTQSSGFSGFGSGTGGFSFGSNNSSVQGFGGWRS.

Residue Gly-2 is modified to N-acetylglycine. The residue at position 30 (Ser-30) is a Phosphoserine. Blade repeat units follow at residues 41–93 (LLAV…PMKF), 94–150 (PIHH…DAGG), 151–193 (MVID…PSTV), 194–239 (AVTS…ESDH), 240–303 (PVRV…ERQH), 304–359 (HYYL…KSDD), and 360–404 (SLPM…FYMI). A seven-bladed beta propeller region spans residues 41–404 (LLAVSNKYGL…DGVLCPFYMI (364 aa)). Residues 236–1418 (ESDHPVRVLD…AVFGSLPVTS (1183 aa)) form a 44 X 2 AA repeats of F-G region. Residue Thr-416 is modified to Phosphothreonine. A phosphoserine mark is found at Ser-421, Ser-430, and Ser-433. Residues 422–460 (LEGERQPKSPGSTPTTPTSSQAPQKLDASAAAAPASLPP) form a disordered region. Positions 429-441 (KSPGSTPTTPTSS) are enriched in low complexity. Thr-434, Thr-437, and Thr-439 each carry phosphothreonine. Positions 450–586 (SAAAAPASLP…PPSTSAVKVN (137 aa)) are (Microbial infection) Binds human adenovirus 5 (HAdV-5) protein L3 (hexon). Residues 481–2076 (VFSFGSSSLK…GSGTGGFSFG (1596 aa)) form an 11 X 5 AA approximate repeats region. Repeat 1 spans residues 484 to 485 (FG). Composition is skewed to low complexity over residues 489–513 (LKSS…KAAP) and 524–536 (PPSK…TPAA). Residues 489–536 (LKSSATVTGEPPSYSSGSDSSKAAPGPGPSTFSFVPPSKASLAPTPAA) are disordered. Repeat 2 spans residues 548 to 549 (FG). 2 stretches are compositionally biased toward low complexity: residues 597–629 (STPV…HPTP) and 637–658 (VPLK…SSSP). Positions 597–700 (STPVSSSQSA…KQGHQWKDSD (104 aa)) are disordered. Residues Ser-651, Ser-657, and Ser-666 each carry the phosphoserine modification. Thr-670 is subject to Phosphothreonine. Residue Ser-678 is modified to Phosphoserine. Residues 680–1209 (QAKSLQPAVA…VTSTPSASGQ (530 aa)) are a coiled coil. The segment covering 691-700 (KQGHQWKDSD) has biased composition (basic and acidic residues). 2 leucine-zipper regions span residues 740–768 (LRTE…ISSL) and 861–882 (LANN…VDSL). Ser-760 is subject to Phosphoserine. 4 positions are modified to phosphoserine: Ser-940, Ser-970, Ser-974, and Ser-989. The disordered stretch occupies residues 987–1009 (TSSVSQSLESEDARTSCKDDEAV). Over residues 997-1007 (EDARTSCKDDE) the composition is skewed to basic and acidic residues. Thr-1021 carries the post-translational modification Phosphothreonine. Residues Ser-1023, Ser-1045, Ser-1056, and Ser-1081 each carry the phosphoserine modification. The segment covering 1128-1149 (LKNNPATPSTAMGSSVPYSTAK) has biased composition (polar residues). The segment at 1128–1152 (LKNNPATPSTAMGSSVPYSTAKTPH) is disordered. Residues Thr-1134, Thr-1150, and Thr-1156 each carry the phosphothreonine modification. Polar residues-rich tracts occupy residues 1168-1188 (LINS…SSGD) and 1199-1213 (AVTS…FSKP). Residues 1168–1213 (LINSLKPSGPTPASGQLSSGDKASGTAKIETAVTSTPSASGQFSKP) form a disordered region. A Phosphoserine modification is found at Ser-1181. The stretch at 1225 to 1226 (FG) is repeat 3. 2 stretches are compositionally biased toward polar residues: residues 1234-1254 (SNFT…QPDA) and 1273-1285 (PPSG…NTTP). 2 disordered regions span residues 1234–1316 (SNFT…PPSK) and 1337–1408 (LRVG…TSST). Over residues 1288-1299 (PAASSSRPVAPS) the composition is skewed to low complexity. Positions 1301–1310 (TALSTTSSKL) are enriched in polar residues. Thr-1312 is subject to Phosphothreonine. A compositionally biased stretch (polar residues) spans 1347-1368 (KPTNKASSTSLTSTQPTKTSGV). Ser-1353 carries the post-translational modification Phosphoserine. The segment covering 1386-1408 (PPVTSSATTTSVAPPAATSTSST) has biased composition (low complexity). The tract at residues 1409–2084 (AVFGSLPVTS…FGSNNSSVQG (676 aa)) is 18 X 4 AA approximate repeats. 4 repeat units span residues 1411–1412 (FG), 1427–1428 (FG), 1441–1442 (FG), and 1473–1474 (FG). The segment at 1427 to 2085 (FGGTSLSAGK…GSNNSSVQGF (659 aa)) is 11 X 3 AA approximate repeats. The span at 1438-1450 (SFSFGSQQTNSTV) shows a compositional bias: polar residues. Residues 1438 to 1467 (SFSFGSQQTNSTVPPSAPPPTTAATPLPTS) form a disordered region. 2 stretches are compositionally biased toward low complexity: residues 1479–1489 (SATTPSLPMSA) and 1508–1527 (SEVS…AQLP). The disordered stretch occupies residues 1479–1539 (SATTPSLPMS…PPQTSDSVKK (61 aa)). Lys-1538 participates in a covalent cross-link: Glycyl lysine isopeptide (Lys-Gly) (interchain with G-Cter in SUMO2). Repeat copies occupy residues 1635–1636 (FG), 1674–1675 (FG), 1686–1687 (FG), 1713–1714 (FG), 1721–1722 (FG), 1726–1727 (FG), 1732–1733 (FG), 1756–1757 (FG), 1772–1773 (FG), 1786–1787 (FG), 1798–1799 (FG), 1806–1807 (FG), 1812–1813 (FG), 1819–1820 (FG), 1842–1843 (FG), 1851–1852 (FG), 1862–1863 (FG), and 1874–1875 (FG). The interval 1884–1903 (GFFSGLGGKPSQDAANKNPF) is disordered. A run of 5 repeats spans residues 1910 to 1911 (FG), 1922 to 1923 (FG), 1930 to 1931 (FG), 1938 to 1939 (FG), and 1959 to 1960 (FG). At Ser-1963 the chain carries Phosphoserine. Tandem repeats lie at residues 1970–1971 (FG), 1976–1977 (FG), and 1982–1983 (FG). The residue at position 1985 (Ser-1985) is a Phosphoserine. A run of 11 repeats spans residues 1988–1989 (FG), 1994–1995 (FG), 2012–2013 (FG), 2024–2025 (FG), 2026–2027 (FG), 2035–2036 (FG), 2046–2047 (FG), 2056–2057 (FG), 2066–2067 (FG), 2075–2076 (FG), and 2085–2086 (FG).

Homodimer. Part of the nuclear pore complex (NPC). Interacts with NUP88. Interacts with ZFP36; this interaction increases upon lipopolysaccharide (LPS) stimulation. Interacts with DDX19. Interacts with XPO1. Interacts with XPO5. As to quaternary structure, (Microbial infection) Interacts with human herpes virus 1 (HHV-1) protein UL25; this interaction might be essential to the capsid docking onto the host nuclear pore. In terms of assembly, (Microbial infection) Interacts (via N-terminus) with human adenovirus 5 (HAdV-5) protein L3 (hexon); this interaction might be essential for the release of the virus genome to the nucleus. Post-translationally, probably glycosylated as it reacts with wheat germ agglutinin (WGA). As to expression, expressed in thymus, spleen, bone marrow, kidney, brain and testis, but hardly in all other tissues or in whole embryos during development.

Its subcellular location is the nucleus. The protein resides in the nuclear pore complex. Functionally, part of the nuclear pore complex. Has a critical role in nucleocytoplasmic transport. May serve as a docking site in the receptor-mediated import of substrates across the nuclear pore complex. In terms of biological role, (Microbial infection) Required for capsid disassembly of the human adenovirus 5 (HadV-5) leading to release of the viral genome to the nucleus (in vitro). The protein is Nuclear pore complex protein Nup214 (NUP214) of Homo sapiens (Human).